A 491-amino-acid polypeptide reads, in one-letter code: Nucleoside transporter 1.2 (491 aa).

6 helical membrane passes run 27–47 (FYVYVVAFMCGVSMMMSVNAV), 82–102 (YNLIGIVTSLIMEPLTLLSWF), 109–129 (VRLLGGLVILIVEIIVLMVVP), 136–156 (AGAVATICCTGFIGGFGKSIF), 173–193 (STMMGGVGMSGVLTSLLQIIV), and 209–229 (KIYYGLDVGIQGMTFVALILL). Over residues 261-273 (HTDEHPTHDKEGR) the composition is skewed to basic and acidic residues. Disordered stretches follow at residues 261–280 (HTDEHPTHDKEGRNSSSGKE) and 290–309 (AAAKSEGPDAVEESSWPHEV). The N-linked (GlcNAc...) asparagine glycan is linked to asparagine 274. 5 helical membrane-spanning segments follow: residues 333–353 (MFVACAFNFLITLFLFPGIAV), 361–381 (WFSTIAVFIFNVFDVLGRFSP), 395–415 (WIIVAASFARVIFVPLLLLHS), 427–447 (VMEVIFGFSNGYVGSMALVLG), and 460–480 (FVAGTLMGISILVGGTIGTVL).

The protein belongs to the SLC29A/ENT transporter (TC 2.A.57) family.

It localises to the membrane. It carries out the reaction adenosine(in) + H(+)(in) = adenosine(out) + H(+)(out). It catalyses the reaction uridine(in) + H(+)(in) = uridine(out) + H(+)(out). In terms of biological role, sodium-independent nucleoside:H(+) symporter; transports adenosine with high affinity and uridine with moderate affinity. Can transport cytidine and thymidine. The polypeptide is Nucleoside transporter 1.2 (Leishmania donovani).